The chain runs to 94 residues: Putative pterin-4-alpha-carbinolamine dehydratase (94 aa).

The protein belongs to the pterin-4-alpha-carbinolamine dehydratase family.

It carries out the reaction (4aS,6R)-4a-hydroxy-L-erythro-5,6,7,8-tetrahydrobiopterin = (6R)-L-erythro-6,7-dihydrobiopterin + H2O. The chain is Putative pterin-4-alpha-carbinolamine dehydratase from Caulobacter vibrioides (strain ATCC 19089 / CIP 103742 / CB 15) (Caulobacter crescentus).